Consider the following 312-residue polypeptide: Lipoyl synthase (312 aa).

Cys37, Cys42, Cys48, Cys67, Cys71, Cys74, and Ser281 together coordinate [4Fe-4S] cluster. The Radical SAM core domain occupies 52-270 (RDGPGTATFM…AVAEREFDFL (219 aa)).

The protein belongs to the radical SAM superfamily. Lipoyl synthase family. Requires [4Fe-4S] cluster as cofactor.

The protein resides in the cytoplasm. It catalyses the reaction [[Fe-S] cluster scaffold protein carrying a second [4Fe-4S](2+) cluster] + N(6)-octanoyl-L-lysyl-[protein] + 2 oxidized [2Fe-2S]-[ferredoxin] + 2 S-adenosyl-L-methionine + 4 H(+) = [[Fe-S] cluster scaffold protein] + N(6)-[(R)-dihydrolipoyl]-L-lysyl-[protein] + 4 Fe(3+) + 2 hydrogen sulfide + 2 5'-deoxyadenosine + 2 L-methionine + 2 reduced [2Fe-2S]-[ferredoxin]. It functions in the pathway protein modification; protein lipoylation via endogenous pathway; protein N(6)-(lipoyl)lysine from octanoyl-[acyl-carrier-protein]: step 2/2. Catalyzes the radical-mediated insertion of two sulfur atoms into the C-6 and C-8 positions of the octanoyl moiety bound to the lipoyl domains of lipoate-dependent enzymes, thereby converting the octanoylated domains into lipoylated derivatives. The chain is Lipoyl synthase from Halorubrum lacusprofundi (strain ATCC 49239 / DSM 5036 / JCM 8891 / ACAM 34).